The primary structure comprises 429 residues: Serine--tRNA ligase (429 aa).

An L-serine-binding site is contributed by 229–231 (TAE). 260–262 (RSE) contributes to the ATP binding site. L-serine is bound at residue Glu283. 347–350 (EISS) provides a ligand contact to ATP. Ser383 contributes to the L-serine binding site.

This sequence belongs to the class-II aminoacyl-tRNA synthetase family. Type-1 seryl-tRNA synthetase subfamily. In terms of assembly, homodimer. The tRNA molecule binds across the dimer.

The protein resides in the cytoplasm. It carries out the reaction tRNA(Ser) + L-serine + ATP = L-seryl-tRNA(Ser) + AMP + diphosphate + H(+). It catalyses the reaction tRNA(Sec) + L-serine + ATP = L-seryl-tRNA(Sec) + AMP + diphosphate + H(+). It participates in aminoacyl-tRNA biosynthesis; selenocysteinyl-tRNA(Sec) biosynthesis; L-seryl-tRNA(Sec) from L-serine and tRNA(Sec): step 1/1. Its function is as follows. Catalyzes the attachment of serine to tRNA(Ser). Is also able to aminoacylate tRNA(Sec) with serine, to form the misacylated tRNA L-seryl-tRNA(Sec), which will be further converted into selenocysteinyl-tRNA(Sec). The protein is Serine--tRNA ligase of Orientia tsutsugamushi (strain Boryong) (Rickettsia tsutsugamushi).